Reading from the N-terminus, the 463-residue chain is Probable Xaa-Pro aminopeptidase pepP (463 aa).

Mn(2+) is bound by residues D259, D270, E393, and E433.

It belongs to the peptidase M24B family. Mn(2+) is required as a cofactor.

The catalysed reaction is Release of any N-terminal amino acid, including proline, that is linked to proline, even from a dipeptide or tripeptide.. Functionally, catalyzes the removal of a penultimate prolyl residue from the N-termini of peptides. The chain is Probable Xaa-Pro aminopeptidase pepP (pepP) from Pyrenophora tritici-repentis (strain Pt-1C-BFP) (Wheat tan spot fungus).